The primary structure comprises 363 residues: Type-1 angiotensin II receptor B (363 aa).

At 1–27 (MLSNISAGENSEVEKIVVKCSKSGMHN) the chain is on the extracellular side. Residue Asn4 is glycosylated (N-linked (GlcNAc...) asparagine). Disulfide bonds link Cys20–Cys274 and Cys103–Cys182. Residues 28–57 (YIFITIPIIYSTIFVVGVFGNSLVVIVIYS) traverse the membrane as a helical segment. Topologically, residues 58-63 (YMKMKT) are cytoplasmic. Residues 64–91 (MASVFLMNLALSDLCFVITLPLWAVYTA) form a helical membrane-spanning segment. Topologically, residues 92–100 (MHYHWPFGD) are extracellular. Residues 101–127 (LLCKIASTAITLNLYTTVFLLTCLSID) traverse the membrane as a helical segment. The Cytoplasmic segment spans residues 128–143 (RYSAIVHPMKSRIRRT). A helical transmembrane segment spans residues 144–167 (VMVARLTCVGIWLVAFLASLPSVI). Over 168–192 (YRQIFIFPDTNQTVCALVYHSGHIY) the chain is Extracellular. Position 169 (Arg169) interacts with angiotensin II. A glycan (N-linked (GlcNAc...) asparagine) is linked at Asn178. Positions 186 and 201 each coordinate angiotensin II. Residues 193–218 (FMVGMSLVKNIVGFFIPFVIILTSYT) form a helical membrane-spanning segment. At 219-239 (LIGKTLKEVYRAQRARNDDIF) the chain is on the cytoplasmic side. The helical transmembrane segment at 240–268 (KMIVAVVLLFFFCWIPHQVFTFLDVLIQM) threads the bilayer. At 269–278 (DVIQNCKMYD) the chain is on the extracellular side. Residues 279–304 (IVDTGMPITICIAYFNSCLNPFLYGF) form a helical membrane-spanning segment. At 305-363 (FGKKFRKHFLQLIKYIPPKMRTHASVNTKSSTVSQRLSDTKCASNKIALWIFDIEEHCK) the chain is on the cytoplasmic side. 2 S-palmitoyl cysteine lipidation sites follow: Cys346 and Cys362.

Belongs to the G-protein coupled receptor 1 family. In terms of processing, C-terminal Ser or Thr residues may be phosphorylated. As to expression, heart membranes, follicular oocytes.

The protein localises to the cell membrane. Functionally, receptor for angiotensin II, a vasoconstricting peptide, which acts as a key regulator of blood pressure and sodium retention by the kidney. The activated receptor in turn couples to G-alpha proteins G(q) (GNAQ, GNA11, GNA14 or GNA15) and thus activates phospholipase C and increases the cytosolic Ca(2+) concentrations, which in turn triggers cellular responses such as stimulation of protein kinase C. This Xenopus laevis (African clawed frog) protein is Type-1 angiotensin II receptor B (agtr1-b).